The following is a 143-amino-acid chain: Transcriptional regulator MraZ (143 aa).

SpoVT-AbrB domains lie at 5 to 47 (EYQH…PMHE) and 76 to 119 (ATEC…SKVI).

This sequence belongs to the MraZ family. As to quaternary structure, forms oligomers.

The protein localises to the cytoplasm. It localises to the nucleoid. This is Transcriptional regulator MraZ from Bacillus subtilis (strain 168).